A 382-amino-acid chain; its full sequence is Na(+)/H(+) antiporter NhaA (382 aa).

11 consecutive transmembrane segments (helical) span residues 13 to 33 (IGGI…NSPF), 58 to 78 (LLLW…GLEI), 94 to 114 (LVPA…FIFF), 124 to 144 (GWAI…SLLG), 153 to 173 (ILLT…IALF), 179 to 199 (SLLS…LNYF), 204 to 224 (ISVF…SGVH), 256 to 276 (VVFL…FVGL), 285 to 305 (VVLG…FLSL), 325 to 345 (VYGI…IGSL), and 357 to 377 (MVKI…FLVL).

This sequence belongs to the NhaA Na(+)/H(+) (TC 2.A.33) antiporter family.

The protein localises to the cell inner membrane. The catalysed reaction is Na(+)(in) + 2 H(+)(out) = Na(+)(out) + 2 H(+)(in). Functionally, na(+)/H(+) antiporter that extrudes sodium in exchange for external protons. The polypeptide is Na(+)/H(+) antiporter NhaA (Legionella pneumophila (strain Paris)).